We begin with the raw amino-acid sequence, 231 residues long: 2-phospho-L-lactate guanylyltransferase (231 aa).

This sequence belongs to the CofC family. In terms of assembly, homodimer.

It catalyses the reaction (2S)-2-phospholactate + GTP + H(+) = (2S)-lactyl-2-diphospho-5'-guanosine + diphosphate. It participates in cofactor biosynthesis; coenzyme F420 biosynthesis. Its function is as follows. Guanylyltransferase that catalyzes the activation of (2S)-2-phospholactate (2-PL) as (2S)-lactyl-2-diphospho-5'-guanosine, via the condensation of 2-PL with GTP. It is involved in the biosynthesis of coenzyme F420, a hydride carrier cofactor. The sequence is that of 2-phospho-L-lactate guanylyltransferase from Haloterrigena turkmenica (strain ATCC 51198 / DSM 5511 / JCM 9101 / NCIMB 13204 / VKM B-1734 / 4k) (Halococcus turkmenicus).